A 514-amino-acid chain; its full sequence is Double-stranded RNA-binding protein 6 (514 aa).

DRBM domains are found at residues Met-1–Arg-70 and Val-87–Gln-155. 2 disordered regions span residues Asn-195–Pro-268 and Glu-455–His-496. Composition is skewed to polar residues over residues Phe-216 to Ser-225, Ala-249 to Pro-263, and Ser-473 to Thr-484.

Binds double-stranded RNA. The protein is Double-stranded RNA-binding protein 6 (DRB6) of Oryza sativa subsp. japonica (Rice).